The chain runs to 308 residues: Zinc transporter ZIP9 (308 aa).

A helical transmembrane segment spans residues Phe-4–Ile-24. Asn-29 is a glycosylation site (N-linked (GlcNAc...) asparagine). Helical transmembrane passes span Leu-35–Val-55, Ala-107–Gly-127, Ile-147–Ala-167, Leu-177–Phe-197, and His-211–Ser-231. An N-linked (GlcNAc...) asparagine glycan is attached at Asn-242. A run of 2 helical transmembrane segments spans residues Gly-245–Pro-265 and Leu-287–Gln-307.

Belongs to the ZIP transporter (TC 2.A.5) family.

The protein resides in the golgi apparatus. The protein localises to the trans-Golgi network membrane. It is found in the cell membrane. Its subcellular location is the cytoplasm. It localises to the perinuclear region. The protein resides in the mitochondrion. The protein localises to the nucleus. It catalyses the reaction Zn(2+)(in) = Zn(2+)(out). Functionally, transports zinc ions across cell and organelle membranes into the cytoplasm and regulates intracellular zinc homeostasis. Participates in the zinc ions efflux out of the secretory compartments. Regulates intracellular zinc level, resulting in the enhancement of AKT1 and MAPK3/MAPK1 (Erk1/2) phosphorylation in response to the BCR activation. Also functions as a membrane androgen receptor that mediates, through a G protein, the non-classical androgen signaling pathway, characterized by the activation of MAPK3/MAPK1 (Erk1/2) and transcription factors CREB1 or ATF1. This pathway contributes to CLDN1 and CLDN5 expression and tight junction formation between adjacent Sertoli cells. Mediates androgen-induced vascular endothelial cell proliferation through activation of an inhibitory G protein leading to the AKT1 and MAPK3/MAPK1 (Erk1/2) activation which in turn modulate inhibition (phosphorylation) of GSK3B and CCND1 transcription. Moreover, has dual functions as a membrane-bound androgen receptor and as an androgen-dependent zinc transporter both of which are mediated through an inhibitory G protein (Gi) that mediates both MAP kinase and zinc signaling leading to the androgen-dependent apoptotic process. In Mus musculus (Mouse), this protein is Zinc transporter ZIP9.